A 269-amino-acid polypeptide reads, in one-letter code: ATP synthase subunit gamma, mitochondrial (269 aa).

As to quaternary structure, F-type ATP synthases have 2 components, the catalytic core F(1) and the membrane-embedded component F(0), linked together by a central stalk and a peripheral stalk. The central stalk, also called rotor shaft, is often seen as part of F(1). The peripheral stalk is seen as part of F(0). F(0) contains the membrane channel next to the rotor. F-type ATP synthases form dimers but each monomer functions independently in ATP generation. The dimer consists of 18 different polypeptides: ATP1 (subunit alpha, part of F(1), 3 molecules per monomer), ATP2 (subunit beta, part of F(1), 3 molecules per monomer), ATP3 (subunit gamma, part of the central stalk), ATP4 (subunit b, part of the peripheral stalk), ATP5/OSCP (subunit 5/OSCP, part of the peripheral stalk), ATP6 (subunit a, part of the peripheral stalk), ATP7 (subunit d, part of the peripheral stalk), ATP8 (subunit 8, part of the peripheral stalk), OLI1 (subunit c, part of the rotor, 10 molecules per monomer), ATP14 (subunit h, part of the peripheral stalk), ATP15 (subunit epsilon, part of the central stalk), ATP16 (subunit delta, part of the central stalk), ATP17 (subunit f, part of the peripheral stalk), ATP18 (subunit i/j, part of the peripheral stalk). Dimer-specific subunits are ATP19 (subunit k, at interface between monomers), ATP20 (subunit g, at interface between monomers), TIM11 (subunit e, at interface between monomers). Also contains subunit L.

It localises to the mitochondrion inner membrane. In terms of biological role, mitochondrial membrane ATP synthase (F(1)F(0) ATP synthase or Complex V) produces ATP from ADP in the presence of a proton gradient across the membrane which is generated by electron transport complexes of the respiratory chain. F-type ATP synthases consist of two structural domains, F(1) - containing the extramembraneous catalytic core, and F(0) - containing the membrane proton channel, linked together by a central stalk and a peripheral stalk. During catalysis, ATP synthesis in the catalytic domain of F(1) is coupled via a rotary mechanism of the central stalk subunits to proton translocation. Part of the complex F(1) domain and the central stalk which is part of the complex rotary element. The gamma/ATP3 subunit protrudes into the catalytic domain formed of alpha/ATP1(3)beta/ATP2(3). Rotation of the central stalk against the surrounding alpha/ATP1(3)beta/ATP2(3) subunits leads to hydrolysis of ATP in three separate catalytic sites on the beta/ATP2 subunits. In Pichia angusta (Yeast), this protein is ATP synthase subunit gamma, mitochondrial.